We begin with the raw amino-acid sequence, 561 residues long: DNA ligase (561 aa).

E249 is an ATP binding site. K251 (N6-AMP-lysine intermediate) is an active-site residue. 6 residues coordinate ATP: R256, R271, E301, F340, R417, and K423.

Belongs to the ATP-dependent DNA ligase family. Requires Mg(2+) as cofactor.

The catalysed reaction is ATP + (deoxyribonucleotide)n-3'-hydroxyl + 5'-phospho-(deoxyribonucleotide)m = (deoxyribonucleotide)n+m + AMP + diphosphate.. Its function is as follows. DNA ligase that seals nicks in double-stranded DNA during DNA replication, DNA recombination and DNA repair. This Methanothermobacter thermautotrophicus (strain ATCC 29096 / DSM 1053 / JCM 10044 / NBRC 100330 / Delta H) (Methanobacterium thermoautotrophicum) protein is DNA ligase.